The sequence spans 166 residues: Phosphopantetheine adenylyltransferase (166 aa).

A substrate-binding site is contributed by Ser-9. ATP is bound by residues 9-10 (SF) and His-17. Substrate is bound by residues Lys-41, Thr-74, and Arg-88. ATP-binding positions include 89-91 (GLR), Glu-99, and 124-130 (DSFISSS).

Belongs to the bacterial CoaD family. In terms of assembly, homohexamer. The cofactor is Mg(2+).

It is found in the cytoplasm. The catalysed reaction is (R)-4'-phosphopantetheine + ATP + H(+) = 3'-dephospho-CoA + diphosphate. It participates in cofactor biosynthesis; coenzyme A biosynthesis; CoA from (R)-pantothenate: step 4/5. Its function is as follows. Reversibly transfers an adenylyl group from ATP to 4'-phosphopantetheine, yielding dephospho-CoA (dPCoA) and pyrophosphate. This Lactobacillus johnsonii (strain CNCM I-12250 / La1 / NCC 533) protein is Phosphopantetheine adenylyltransferase.